The sequence spans 223 residues: UPF0758 protein HD_0732 (223 aa).

The MPN domain occupies 98 to 220; sequence TINTPHLAIM…YFSFEEERFH (123 aa). Positions 169, 171, and 182 each coordinate Zn(2+). Residues 169–182 carry the JAMM motif motif; sequence HNHPSGNCTASQAD.

It belongs to the UPF0758 family.

This Haemophilus ducreyi (strain 35000HP / ATCC 700724) protein is UPF0758 protein HD_0732.